Reading from the N-terminus, the 152-residue chain is MDARRMKKEEGLTENTGLPRKLLEKHDPWPAYVTYTSQTVKRLIEKSKTRELECMRALEERPWASRQNKPSSVIQPKRRKSSKSSGKAVFRDTLSESTLSMWGAYSVLAMAPTMIPEPTHLHADSRDCPTENYNKIIFARKPMMRMLPTVRY.

Residues M1 to G11 are compositionally biased toward basic and acidic residues. 2 disordered regions span residues M1–L23 and E60–V89. Over residues S65–I74 the composition is skewed to polar residues.

In terms of tissue distribution, expressed in fetal skeletal muscle and kidney.

This chain is CMT1A duplicated region transcript 4 protein (CDRT4), found in Homo sapiens (Human).